Consider the following 4981-residue polypeptide: Protocadherin Fat 4 (4981 aa).

A signal peptide spans 1 to 42 (MNLAANRAPGRRRLPLPSPSLCQLLRVWGLLSLLPGSARVQA). Over 43 to 4505 (AEQRQVFQVM…PDEISLPLWA (4463 aa)) the chain is Extracellular. Cadherin domains lie at 44–135 (EQRQ…APVF), 136–250 (PDPS…PPVF), 251–353 (GSSH…DPVV), 359–475 (PATS…PPVF), 476–582 (EQQV…KPVF), 584–689 (QPEG…SPVF), 690–793 (YPVQ…PPVF), 794–893 (SQAA…APHF), 894–996 (LQAV…PPVF), 997–1100 (DQIS…RPLF), 1101–1210 (NSTN…APKF), 1211–1315 (LKDF…TPSF), 1316–1420 (PKST…PPSF), 1421–1529 (PPGD…VPMF), 1529–1629 (FISQ…GPVF), 1630–1740 (TQTK…PPVF), 1741–1841 (PTDT…TPRF), 1842–1944 (SRPV…PPVF), 1945–2051 (SMSS…PPMF), 2051–2154 (FLSP…NPVF), 2155–2259 (AQAM…VPVF), 2260–2364 (ELSP…VPTF), 2365–2468 (ANNM…PPRF), 2469–2569 (QHHP…FPKV), 2570–2671 (RAKE…APTF), 2672–2775 (EEDP…APRF), 2775–2874 (FSQI…TPRF), 2875–2985 (SRPS…PPQF), 2986–3091 (LQNK…TPEF), 3092–3196 (SQNH…SPVF), 3197–3300 (VPDE…VPRF), 3301–3406 (VSKL…PPVF), 3407–3512 (SLST…GPVL), and 3511–3622 (VLTV…VEIF). N84 and N237 each carry an N-linked (GlcNAc...) asparagine glycan. N393, N416, N435, N483, N551, N615, N676, N721, N825, N880, N948, N1085, N1101, N1104, N1225, N1296, N1389, and N1514 each carry an N-linked (GlcNAc...) asparagine glycan. N-linked (GlcNAc...) asparagine glycosylation is found at N1828, N1899, N1967, and N2119. 2 N-linked (GlcNAc...) asparagine glycosylation sites follow: N2387 and N2432. Residues N2923, N2939, N3038, N3142, N3219, N3394, and N3479 are each glycosylated (N-linked (GlcNAc...) asparagine). N-linked (GlcNAc...) asparagine glycosylation is found at N3708 and N3760. The region spanning 3804–3862 (DHDPCIHGPCQNGGSCLRRLAVGSALKIQESLPVIIVANEPLQPSQCKCVPGYAGSWCE) is the EGF-like 1 domain. Disulfide bonds link C3808/C3819, C3813/C3850, C3852/C3861, C3868/C3879, C3873/C3888, C3890/C3899, C3906/C3917, C3911/C3926, C3928/C3937, C3944/C3955, C3949/C3964, and C3966/C3975. An EGF-like 2; calcium-binding domain is found at 3864 to 3900 (DIDECLPAPCHNGGTCHNLVGGFSCSCPEGFTGRACE). The EGF-like 3; calcium-binding domain occupies 3902-3938 (DINECLPSPCKHGAVCQNFPGGFNCVCKTGYTGKMCE). In terms of domain architecture, EGF-like 4 spans 3940–3976 (SVNYCECNPCFNGGSCQSGVESYYCHCPFGVFGKHCE). A Laminin G-like 1 domain is found at 3977–4161 (LNSYGFEELS…LAAQGILDQC (185 aa)). N-linked (GlcNAc...) asparagine glycosylation is present at N4019. 4 disulfide bridges follow: C4135/C4161, C4168/C4179, C4173/C4188, and C4190/C4199. Residues 4164–4200 (LEGTCARNPCQHGGTCVDFWSWQQCQCMEGLTGKYCE) form the EGF-like 5 domain. In terms of domain architecture, Laminin G-like 2 spans 4219–4399 (YHMSQSEKRE…KTDPSVKIGC (181 aa)). Residues N4269 and N4314 are each glycosylated (N-linked (GlcNAc...) asparagine). 4 disulfide bridges follow: C4366–C4399, C4431–C4442, C4436–C4452, and C4454–C4463. The EGF-like 6 domain maps to 4427-4464 (PPGDCASHPCQNGGSCEPGLLSGYTCSCPESHTGRTCE). The helical transmembrane segment at 4506 to 4526 (VPAIVGSCATALALLVLSLIL) threads the bilayer. The Cytoplasmic portion of the chain corresponds to 4527-4981 (CNQCRGKMPK…AKDGEAEQYV (455 aa)). Disordered regions lie at residues 4535–4585 (PKNP…PDII), 4677–4713 (PSSYGQGLRTSSLSHSACPTPNPLSRHSPAPFSKPSA), 4753–4773 (RRSKSPQAMASHGSRPGSRLK), 4796–4911 (RLNT…PAAA), and 4957–4981 (AAGNEEGKSGAAKPAAKDGEAEQYV). Positions 4677 to 4701 (PSSYGQGLRTSSLSHSACPTPNPLS) are enriched in polar residues. The necessary and sufficient for interaction with MPDZ stretch occupies residues 4708–4797 (FSKPSAFYRN…GLSIEEVERL (90 aa)). Positions 4811 to 4823 (DHGRSSSEEDCRR) are enriched in basic and acidic residues. Phosphoserine is present on S4878. Over residues 4971-4981 (AAKDGEAEQYV) the composition is skewed to basic and acidic residues.

In terms of assembly, heterophilic interaction with DCHS1; this interaction affects their respective protein levels. Interacts (via cytoplasmic domain) with MPDZ. Forms a complex with PALS1 and MPDZ. As to expression, widely expressed.

Its subcellular location is the membrane. Cadherins are cell-cell interaction molecules. FAT4 plays a role in the maintenance of planar cell polarity as well as in inhibition of YAP1-mediated neuroprogenitor cell proliferation and differentiation. In Mus musculus (Mouse), this protein is Protocadherin Fat 4 (Fat4).